A 1073-amino-acid chain; its full sequence is uncharacterized protein (1073 aa).

The N-terminal stretch at 1–36 (MAEIIHHSNVFTWAFHVSEYDGAPLLLLGSFSSVAS) is a signal peptide. The N-linked (GlcNAc...) asparagine glycan is linked to Asn132. 392–399 (ATAGIGKS) is an ATP binding site. 5 N-linked (GlcNAc...) asparagine glycosylation sites follow: Asn544, Asn632, Asn703, Asn732, and Asn953.

This is an uncharacterized protein from Schizosaccharomyces pombe (strain 972 / ATCC 24843) (Fission yeast).